A 634-amino-acid polypeptide reads, in one-letter code: Poly(ribitol-phosphate) beta-glucosyltransferase (634 aa).

Belongs to the glycosyltransferase 2 family.

It carries out the reaction 4-O-[(D-ribitylphospho)(n)-D-ribitylphospho-(2R)-glycerylphospho]-N-acetyl-beta-D-mannosaminyl-(1-&gt;4)-N-acetyl-alpha-D-glucosaminyl di-trans,octa-cis-undecaprenyl diphosphate + n UDP-alpha-D-glucose = 4-O-[(2-beta-D-glucosyl-D-ribitylphospho)(n)-D-ribitylphospho-(2R)-glycerylphospho]-N-acetyl-beta-D-mannosaminyl-(1-&gt;4)-N-acetyl-alpha-D-glucosaminyl di-trans,octa-cis-undecaprenyl diphosphate + n UDP + n H(+). It functions in the pathway cell wall biogenesis; poly(ribitol phosphate) teichoic acid biosynthesis. In terms of biological role, attaches glucose residues to poly(RboP)-wall teichoic acids (WTAs). This Bacillus spizizenii (strain ATCC 23059 / NRRL B-14472 / W23) (Bacillus subtilis subsp. spizizenii) protein is Poly(ribitol-phosphate) beta-glucosyltransferase.